A 257-amino-acid polypeptide reads, in one-letter code: 5'-nucleotidase SurE (257 aa).

The a divalent metal cation site is built by Asp-8, Asp-9, Ser-40, and Asn-93.

Belongs to the SurE nucleotidase family. It depends on a divalent metal cation as a cofactor.

It localises to the cytoplasm. It catalyses the reaction a ribonucleoside 5'-phosphate + H2O = a ribonucleoside + phosphate. In terms of biological role, nucleotidase that shows phosphatase activity on nucleoside 5'-monophosphates. This chain is 5'-nucleotidase SurE, found in Phenylobacterium zucineum (strain HLK1).